Here is a 246-residue protein sequence, read N- to C-terminus: Probable transcriptional regulatory protein HAPS_0943 (246 aa).

Belongs to the TACO1 family.

It localises to the cytoplasm. In Glaesserella parasuis serovar 5 (strain SH0165) (Haemophilus parasuis), this protein is Probable transcriptional regulatory protein HAPS_0943.